A 235-amino-acid polypeptide reads, in one-letter code: Large ribosomal subunit protein uL1 (235 aa).

The protein belongs to the universal ribosomal protein uL1 family. In terms of assembly, part of the 50S ribosomal subunit.

In terms of biological role, binds directly to 23S rRNA. The L1 stalk is quite mobile in the ribosome, and is involved in E site tRNA release. Its function is as follows. Protein L1 is also a translational repressor protein, it controls the translation of the L11 operon by binding to its mRNA. In Corynebacterium diphtheriae (strain ATCC 700971 / NCTC 13129 / Biotype gravis), this protein is Large ribosomal subunit protein uL1.